Here is a 459-residue protein sequence, read N- to C-terminus: Flavin-containing monooxygenase FMO GS-OX5 (459 aa).

17 to 22 lines the FAD pocket; that stretch reads GAGAAG. NADP(+) is bound at residue 212–217; the sequence is GNFASG.

It belongs to the FMO family.

It catalyses the reaction a (Z)-omega-(methylsulfanyl)-N-sulfo-alkylhydroximate S-glucoside + NADPH + O2 + H(+) = a (Z)-omega-(methylsulfinyl)-alkyl-glucosinolate + NADP(+) + H2O. Catalyzes the conversion of methylthioalkyl glucosinolates into methylsulfinylalkyl glucosinolates. Specific for 8-methylthiooctyl (8-MTO) glucosinolates. The sequence is that of Flavin-containing monooxygenase FMO GS-OX5 (FMOGS-OX5) from Arabidopsis thaliana (Mouse-ear cress).